A 450-amino-acid polypeptide reads, in one-letter code: CBL-interacting protein kinase 23 (450 aa).

Residues 13 to 268 (YELGRTLGEG…IAELINNEWF (256 aa)) form the Protein kinase domain. ATP contacts are provided by residues 19-27 (LGEGTFAKV) and Lys-42. Asp-136 (proton acceptor) is an active-site residue. The activation loop stretch occupies residues 154-183 (DFGLSALSQQVREDGLLHTTCGTPNYVAPE). The 26-residue stretch at 306–331 (EERPSVMNAFELISTSQGLNLGTLFE) folds into the NAF domain. The tract at residues 339–368 (KRETRFASRLPANEILSKIEAAAGPMGFNV) is PPI.

The protein belongs to the protein kinase superfamily. CAMK Ser/Thr protein kinase family. SNF1 subfamily. Requires Mn(2+) as cofactor.

The catalysed reaction is L-seryl-[protein] + ATP = O-phospho-L-seryl-[protein] + ADP + H(+). The enzyme catalyses L-threonyl-[protein] + ATP = O-phospho-L-threonyl-[protein] + ADP + H(+). Its function is as follows. CIPK serine-threonine protein kinases interact with CBL proteins. Binding of a CBL protein to the regulatory NAF domain of CIPK protein lead to the activation of the kinase in a calcium-dependent manner. This Oryza sativa subsp. japonica (Rice) protein is CBL-interacting protein kinase 23 (CIPK23).